We begin with the raw amino-acid sequence, 269 residues long: 4-hydroxy-tetrahydrodipicolinate reductase (269 aa).

Residues 8-13 (GVAGRM), 98-100 (GTT), and 122-125 (APNM) contribute to the NAD(+) site. The Proton donor/acceptor role is filled by H156. Residue H157 coordinates (S)-2,3,4,5-tetrahydrodipicolinate. K160 (proton donor) is an active-site residue. 166–167 (GT) is a (S)-2,3,4,5-tetrahydrodipicolinate binding site.

Belongs to the DapB family.

Its subcellular location is the cytoplasm. The enzyme catalyses (S)-2,3,4,5-tetrahydrodipicolinate + NAD(+) + H2O = (2S,4S)-4-hydroxy-2,3,4,5-tetrahydrodipicolinate + NADH + H(+). It catalyses the reaction (S)-2,3,4,5-tetrahydrodipicolinate + NADP(+) + H2O = (2S,4S)-4-hydroxy-2,3,4,5-tetrahydrodipicolinate + NADPH + H(+). It functions in the pathway amino-acid biosynthesis; L-lysine biosynthesis via DAP pathway; (S)-tetrahydrodipicolinate from L-aspartate: step 4/4. In terms of biological role, catalyzes the conversion of 4-hydroxy-tetrahydrodipicolinate (HTPA) to tetrahydrodipicolinate. This is 4-hydroxy-tetrahydrodipicolinate reductase from Chromohalobacter salexigens (strain ATCC BAA-138 / DSM 3043 / CIP 106854 / NCIMB 13768 / 1H11).